The chain runs to 89 residues: DNA/RNA-binding protein Alba 2 (89 aa).

The residue at position 12 (Lys-12) is an N6-acetyllysine.

The protein belongs to the histone-like Alba family. In terms of processing, acetylated. Acetylation at Lys-12 decreases DNA-binding affinity.

It localises to the cytoplasm. Its subcellular location is the chromosome. Its function is as follows. Binds double-stranded DNA tightly but without sequence specificity. Involved in DNA compaction. In Saccharolobus shibatae (strain ATCC 51178 / DSM 5389 / JCM 8931 / NBRC 15437 / B12) (Sulfolobus shibatae), this protein is DNA/RNA-binding protein Alba 2.